A 217-amino-acid polypeptide reads, in one-letter code: GTP-binding protein yptV2 (217 aa).

20-27 (GDSGVGKS) contributes to the GTP binding site. Positions 42–50 (FITTIGIDF) match the Effector region motif. GTP-binding positions include 68-72 (DTAGQ) and 126-129 (NKLD). Residues 198–217 (QPVRLTSGSPSPAQGKSCCR) are disordered. A compositionally biased stretch (polar residues) spans 201-211 (RLTSGSPSPAQ). Residues C215 and C216 are each lipidated (S-geranylgeranyl cysteine).

It belongs to the small GTPase superfamily. Rab family.

It localises to the cell membrane. In terms of biological role, protein transport. Probably involved in vesicular traffic. The polypeptide is GTP-binding protein yptV2 (YPTV2) (Volvox carteri (Green alga)).